The primary structure comprises 124 residues: Small ribosomal subunit protein uS12cy (124 aa).

The protein belongs to the universal ribosomal protein uS12 family. Part of the 30S ribosomal subunit.

It localises to the plastid. It is found in the chloroplast. Its function is as follows. With S4 and S5 plays an important role in translational accuracy. Located at the interface of the 30S and 50S subunits. In Olimarabidopsis pumila (Dwarf rocket), this protein is Small ribosomal subunit protein uS12cy (rps12-B).